Here is a 368-residue protein sequence, read N- to C-terminus: Protein RecA (368 aa).

72–79 (GNESSGKT) provides a ligand contact to ATP.

The protein belongs to the RecA family.

It is found in the cytoplasm. Its function is as follows. Can catalyze the hydrolysis of ATP in the presence of single-stranded DNA, the ATP-dependent uptake of single-stranded DNA by duplex DNA, and the ATP-dependent hybridization of homologous single-stranded DNAs. It interacts with LexA causing its activation and leading to its autocatalytic cleavage. This Petrotoga mobilis (strain DSM 10674 / SJ95) protein is Protein RecA.